A 366-amino-acid polypeptide reads, in one-letter code: 3-dehydroquinate synthase (366 aa).

Residues 75-80 (DGEEYK), 109-113 (GVVGD), 133-134 (TT), lysine 146, lysine 155, and 173-176 (TLDT) contribute to the NAD(+) site. Positions 188, 251, and 268 each coordinate Zn(2+).

This sequence belongs to the sugar phosphate cyclases superfamily. Dehydroquinate synthase family. Co(2+) serves as cofactor. Requires Zn(2+) as cofactor. It depends on NAD(+) as a cofactor.

The protein localises to the cytoplasm. The enzyme catalyses 7-phospho-2-dehydro-3-deoxy-D-arabino-heptonate = 3-dehydroquinate + phosphate. It participates in metabolic intermediate biosynthesis; chorismate biosynthesis; chorismate from D-erythrose 4-phosphate and phosphoenolpyruvate: step 2/7. Functionally, catalyzes the conversion of 3-deoxy-D-arabino-heptulosonate 7-phosphate (DAHP) to dehydroquinate (DHQ). The protein is 3-dehydroquinate synthase of Nitrosospira multiformis (strain ATCC 25196 / NCIMB 11849 / C 71).